The sequence spans 447 residues: UDP-N-acetylmuramoylalanine--D-glutamate ligase (447 aa).

Residue Gly112–Thr118 coordinates ATP.

This sequence belongs to the MurCDEF family.

The protein resides in the cytoplasm. It carries out the reaction UDP-N-acetyl-alpha-D-muramoyl-L-alanine + D-glutamate + ATP = UDP-N-acetyl-alpha-D-muramoyl-L-alanyl-D-glutamate + ADP + phosphate + H(+). Its pathway is cell wall biogenesis; peptidoglycan biosynthesis. Cell wall formation. Catalyzes the addition of glutamate to the nucleotide precursor UDP-N-acetylmuramoyl-L-alanine (UMA). The polypeptide is UDP-N-acetylmuramoylalanine--D-glutamate ligase (Legionella pneumophila (strain Paris)).